The chain runs to 91 residues: DNA-directed RNA polymerase subunit omega (91 aa).

It belongs to the RNA polymerase subunit omega family. As to quaternary structure, the RNAP catalytic core consists of 2 alpha, 1 beta, 1 beta' and 1 omega subunit. When a sigma factor is associated with the core the holoenzyme is formed, which can initiate transcription.

The catalysed reaction is RNA(n) + a ribonucleoside 5'-triphosphate = RNA(n+1) + diphosphate. Functionally, promotes RNA polymerase assembly. Latches the N- and C-terminal regions of the beta' subunit thereby facilitating its interaction with the beta and alpha subunits. This chain is DNA-directed RNA polymerase subunit omega, found in Aeromonas hydrophila subsp. hydrophila (strain ATCC 7966 / DSM 30187 / BCRC 13018 / CCUG 14551 / JCM 1027 / KCTC 2358 / NCIMB 9240 / NCTC 8049).